Consider the following 883-residue polypeptide: Protein argonaute 16 (883 aa).

Positions 254–366 constitute a PAZ domain; that stretch reads PVFDFLLTNQ…VPIELCHMVS (113 aa). The region spanning 535 to 844 is the Piwi domain; it reads FLLCVLPERK…AAAQMGQFMK (310 aa).

This sequence belongs to the argonaute family. Ago subfamily.

Functionally, probably involved in the RNA silencing pathway. May bind to short RNAs such as microRNAs (miRNAs) or short interfering RNAs (siRNAs), and represses the translation of mRNAs which are complementary to them. The protein is Protein argonaute 16 (AGO16) of Oryza sativa subsp. japonica (Rice).